Consider the following 515-residue polypeptide: MSTLIPPPSKKQKKEAQLPREVAIIPKDLPNVSIKFQALDTGDNVGGALRVPGAISEKQLEELLNQLNGTSDDPVPYTFSCTIQGKKASDPVKTIDITDNLYSSLIKPGYNSTEDQITLLYTPRAVFKVKPVTRSSSAIAGHGSTILCSAFAPHTSSRMVTGAGDNTARIWDCDTQTPMHTLKGHYNWVLCVSWSPDGEVIATGSMDNTIRLWDPKSGQCLGDALRGHSKWITSLSWEPIHLVKPGSKPRLASSSKDGTIKIWDTVSRVCQYTMSGHTNSVSCVKWGGQGLLYSGSHDRTVRVWDINSQGRCINILKSHAHWVNHLSLSTDYALRIGAFDHTGKKPSTPEEAQKKALENYEKICKKNGNSEEMMVTASDDYTMFLWNPLKSTKPIARMTGHQKLVNHVAFSPDGRYIVSASFDNSIKLWDGRDGKFISTFRGHVASVYQVAWSSDCRLLVSCSKDTTLKVWDVRTRKLSVDLPGHKDEVYTVDWSVDGKRVCSGGKDKMVRLWTH.

The interaction with MDN1 stretch occupies residues 20–128 (REVAIIPKDL…LLYTPRAVFK (109 aa)). The tract at residues 29-125 (LPNVSIKFQA…QITLLYTPRA (97 aa)) is ubiquitin-like (UBL) domain. 8 WD repeats span residues 141-181 (GHGS…PMHT), 184-223 (GHYN…CLGD), 227-273 (GHSK…CQYT), 276-314 (GHTN…RCIN), 352-396 (AQKK…KPIA), 400-439 (GHQK…FIST), 442-481 (GHVA…LSVD), and 484-515 (GHKD…LWTH).

This sequence belongs to the NLE1/RSA4 family. Associates with the pre-60S ribosomal particle. Interacts (via WD repeats) with uL18 (RPL5). Interacts (via UBL domain) with MDN1 (via VWFA/MIDAS domain). Interacts (via WD repeats) with NSA2.

It localises to the nucleus. The protein localises to the nucleolus. Involved in ribosome biogenesis. Required for processing and efficient intra-nuclear transport of pre-60S ribosomal subunits. Interacts with the AAA-ATPase Midasin (MDN1/REA1), which is essential for the ATP-dependent dissociation of a group of nonribosomal factors from the pre-60S particle. The sequence is that of Ribosome assembly protein 4 from Saccharomyces cerevisiae (strain ATCC 204508 / S288c) (Baker's yeast).